Consider the following 103-residue polypeptide: Eukaryotic translation initiation factor 4E-1A-binding protein homolog (103 aa).

The interval 49–103 (NSPLSKTPPPQLAHITNTELNKKVEKSTTTPTTTTPPTTTAKPKPTNDDDIFPME) is disordered. The span at 76–92 (TTTPTTTTPPTTTAKPK) shows a compositional bias: low complexity.

Belongs to the eIF4E-binding protein family.

Regulates assembly of the eIF4F complex. This chain is Eukaryotic translation initiation factor 4E-1A-binding protein homolog (febA), found in Dictyostelium discoideum (Social amoeba).